Reading from the N-terminus, the 371-residue chain is tRNA-specific 2-thiouridylase MnmA (371 aa).

Residues 9–16 (AMSGGVDS) and Met35 each bind ATP. Cys109 acts as the Nucleophile in catalysis. Cys109 and Cys207 are joined by a disulfide. An ATP-binding site is contributed by Gly133. The segment at 157–159 (KDQ) is interaction with tRNA. Residue Cys207 is the Cysteine persulfide intermediate of the active site.

It belongs to the MnmA/TRMU family.

The protein localises to the cytoplasm. It carries out the reaction S-sulfanyl-L-cysteinyl-[protein] + uridine(34) in tRNA + AH2 + ATP = 2-thiouridine(34) in tRNA + L-cysteinyl-[protein] + A + AMP + diphosphate + H(+). In terms of biological role, catalyzes the 2-thiolation of uridine at the wobble position (U34) of tRNA, leading to the formation of s(2)U34. The sequence is that of tRNA-specific 2-thiouridylase MnmA from Solibacter usitatus (strain Ellin6076).